Consider the following 862-residue polypeptide: Squamosa promoter-binding-like protein 1 (862 aa).

The interval 55–98 (KRRRVSPEDDDGEECINAATTNGDDGQISGQRGRSSEDEMPRQG) is disordered. Over residues 72-87 (AATTNGDDGQISGQRG) the composition is skewed to polar residues. The SBP-type zinc finger occupies 104-181 (GPCCQVDGCT…AQHNRRRRKV (78 aa)). Residues C107, C112, C129, H132, C148, C151, H155, and C167 each contribute to the Zn(2+) site. The Bipartite nuclear localization signal signature appears at 164–180 (KKSCRSRLAQHNRRRRK).

As to expression, ubiquitous.

It is found in the nucleus. In terms of biological role, trans-acting factor that binds specifically to the consensus nucleotide sequence 5'-TNCGTACAA-3'. In Oryza sativa subsp. japonica (Rice), this protein is Squamosa promoter-binding-like protein 1 (SPL1).